The primary structure comprises 141 residues: Large ribosomal subunit protein uL11A (141 aa).

The protein belongs to the universal ribosomal protein uL11 family. Part of the ribosomal stalk of the 50S ribosomal subunit. Interacts with L10 and the large rRNA to form the base of the stalk. L10 forms an elongated spine to which L12 dimers bind in a sequential fashion forming a multimeric L10(L12)X complex. One or more lysine residues are methylated.

Functionally, forms part of the ribosomal stalk which helps the ribosome interact with GTP-bound translation factors. In Bacillus cereus (strain ATCC 14579 / DSM 31 / CCUG 7414 / JCM 2152 / NBRC 15305 / NCIMB 9373 / NCTC 2599 / NRRL B-3711), this protein is Large ribosomal subunit protein uL11A.